Consider the following 233-residue polypeptide: Nickel import system ATP-binding protein NikE (233 aa).

The ABC transporter domain maps to 2–228; that stretch reads IELKHVTFGY…DRHPYTKELV (227 aa). An ATP-binding site is contributed by 35 to 42; it reads GESGCGKS.

It belongs to the ABC transporter superfamily. As to quaternary structure, the complex is composed of two ATP-binding proteins (NikD and NikE), two transmembrane proteins (NikB and NikC) and a solute-binding protein (NikA).

Its subcellular location is the cell membrane. It carries out the reaction Ni(2+)(out) + ATP + H2O = Ni(2+)(in) + ADP + phosphate + H(+). Its function is as follows. Part of the ABC transporter complex NikABCDE (Opp2) involved in nickel import. Probably responsible for energy coupling to the transport system. This is Nickel import system ATP-binding protein NikE from Staphylococcus aureus (strain MRSA252).